The chain runs to 151 residues: Small ribosomal subunit protein uS15y (151 aa).

Belongs to the universal ribosomal protein uS15 family.

The chain is Small ribosomal subunit protein uS15y from Oryza sativa subsp. japonica (Rice).